Here is a 570-residue protein sequence, read N- to C-terminus: 4-coumarate--CoA ligase 4 (570 aa).

S218, S219, G220, T221, T222, and K226 together coordinate ATP. Residue Y268 participates in (E)-4-coumaroyl-AMP binding. Position 289 (R289) interacts with CoA. The SBD1 stretch occupies residues 291–360; that stretch reads ELNLVMELIQ…LKFPNAIFGQ (70 aa). Residues A338, Q360, G361, and T365 each coordinate (E)-4-coumaroyl-AMP. Residues Q360, G361, T365, D448, and R463 each contribute to the ATP site. The interval 361 to 427 is SBD2; it reads GYGMTESGTV…VRGHQLMKGY (67 aa). K465 and K469 together coordinate (E)-4-coumaroyl-AMP. 2 residues coordinate CoA: K471 and G472. K554 lines the ATP pocket.

It belongs to the ATP-dependent AMP-binding enzyme family. Mg(2+) serves as cofactor.

The catalysed reaction is (E)-sinapate + ATP + CoA = (E)-sinapoyl-CoA + AMP + diphosphate. The enzyme catalyses (E)-4-coumarate + ATP + CoA = (E)-4-coumaroyl-CoA + AMP + diphosphate. It catalyses the reaction (E)-caffeate + ATP + CoA = (E)-caffeoyl-CoA + AMP + diphosphate. It carries out the reaction (E)-ferulate + ATP + CoA = (E)-feruloyl-CoA + AMP + diphosphate. The catalysed reaction is (E)-sinapate + ATP + H(+) = (E)-sinapoyl-AMP + diphosphate. The enzyme catalyses (E)-sinapoyl-AMP + CoA = (E)-sinapoyl-CoA + AMP + H(+). It catalyses the reaction (E)-4-coumarate + ATP + H(+) = (E)-4-coumaroyl-AMP + diphosphate. It carries out the reaction (E)-4-coumaroyl-AMP + CoA = (E)-4-coumaroyl-CoA + AMP + H(+). The catalysed reaction is (E)-caffeate + ATP + H(+) = (E)-caffeoyl-AMP + diphosphate. The enzyme catalyses (E)-caffeoyl-AMP + CoA = (E)-caffeoyl-CoA + AMP + H(+). It catalyses the reaction (E)-ferulate + ATP + H(+) = (E)-feruloyl-AMP + diphosphate. It carries out the reaction (E)-feruloyl-AMP + CoA = (E)-feruloyl-CoA + AMP + H(+). The protein operates within phytoalexin biosynthesis; 3,4',5-trihydroxystilbene biosynthesis; 3,4',5-trihydroxystilbene from trans-4-coumarate: step 1/2. Produces CoA thioesters of a variety of hydroxy- and methoxy-substituted cinnamic acids, which are used to synthesize several phenylpropanoid-derived compounds, including anthocyanins, flavonoids, isoflavonoids, coumarins, lignin, suberin and wall-bound phenolics. Follows a two-step reaction mechanism, wherein the carboxylate substrate first undergoes adenylation by ATP, followed by a thioesterification in the presence of CoA to yield the final CoA thioesters. This is 4-coumarate--CoA ligase 4 from Arabidopsis thaliana (Mouse-ear cress).